A 189-amino-acid polypeptide reads, in one-letter code: Glucose-6-phosphate isomerase (189 aa).

Fe cation-binding residues include histidine 88, histidine 90, glutamate 97, and histidine 136.

Belongs to the archaeal-type GPI family. As to quaternary structure, homodimer. Requires Fe cation as cofactor.

It localises to the cytoplasm. It catalyses the reaction alpha-D-glucose 6-phosphate = beta-D-fructose 6-phosphate. It functions in the pathway carbohydrate degradation; glycolysis; D-glyceraldehyde 3-phosphate and glycerone phosphate from D-glucose: step 2/4. Inhibited by mannose 6-phosphate, fructose 1-phosphate and fructose 1,6-bisphosphate. This chain is Glucose-6-phosphate isomerase (pgiA), found in Pyrococcus furiosus (strain ATCC 43587 / DSM 3638 / JCM 8422 / Vc1).